Consider the following 412-residue polypeptide: ATP phosphoribosyltransferase regulatory subunit (412 aa).

Belongs to the class-II aminoacyl-tRNA synthetase family. HisZ subfamily. Heteromultimer composed of HisG and HisZ subunits.

The protein localises to the cytoplasm. Its pathway is amino-acid biosynthesis; L-histidine biosynthesis; L-histidine from 5-phospho-alpha-D-ribose 1-diphosphate: step 1/9. Functionally, required for the first step of histidine biosynthesis. May allow the feedback regulation of ATP phosphoribosyltransferase activity by histidine. This chain is ATP phosphoribosyltransferase regulatory subunit, found in Dehalococcoides mccartyi (strain ATCC BAA-2100 / JCM 16839 / KCTC 5957 / BAV1).